The chain runs to 448 residues: Proteases secretion protein PrtE (448 aa).

The Cytoplasmic segment spans residues 1–30; the sequence is MTGMDITTQDELNEAAMRDRASRDEERALR. A helical transmembrane segment spans residues 31–50; the sequence is LGWWLVLAGFGGFLLWALLA. At 51 to 448 the chain is on the periplasmic side; it reads PLDKGVAVQG…DRMHLALTEE (398 aa).

The protein belongs to the membrane fusion protein (MFP) (TC 8.A.1) family.

The protein resides in the cell inner membrane. Involved in the secretion of proteases A, B, C and G. The protein is Proteases secretion protein PrtE (prtE) of Dickeya chrysanthemi (Pectobacterium chrysanthemi).